Reading from the N-terminus, the 445-residue chain is Ribulose bisphosphate carboxylase large chain (445 aa).

2 residues coordinate substrate: Asn-89 and Thr-139. Lys-141 acts as the Proton acceptor in catalysis. A substrate-binding site is contributed by Lys-143. Residues Lys-167, Asp-169, and Glu-170 each coordinate Mg(2+). Lys-167 is modified (N6-carboxylysine). The active-site Proton acceptor is His-260. Substrate-binding residues include Arg-261, His-293, and Ser-345.

Belongs to the RuBisCO large chain family. Type I subfamily. As to quaternary structure, heterohexadecamer of 8 large chains and 8 small chains; disulfide-linked. The disulfide link is formed within the large subunit homodimers. Mg(2+) is required as a cofactor. In terms of processing, the disulfide bond which can form in the large chain dimeric partners within the hexadecamer appears to be associated with oxidative stress and protein turnover.

The protein resides in the plastid. The protein localises to the chloroplast. The enzyme catalyses 2 (2R)-3-phosphoglycerate + 2 H(+) = D-ribulose 1,5-bisphosphate + CO2 + H2O. The catalysed reaction is D-ribulose 1,5-bisphosphate + O2 = 2-phosphoglycolate + (2R)-3-phosphoglycerate + 2 H(+). Functionally, ruBisCO catalyzes two reactions: the carboxylation of D-ribulose 1,5-bisphosphate, the primary event in carbon dioxide fixation, as well as the oxidative fragmentation of the pentose substrate in the photorespiration process. Both reactions occur simultaneously and in competition at the same active site. The chain is Ribulose bisphosphate carboxylase large chain from Callicarpa dichotoma (Purple beautyberry).